Reading from the N-terminus, the 150-residue chain is Large ribosomal subunit protein bL9 (150 aa).

It belongs to the bacterial ribosomal protein bL9 family.

Functionally, binds to the 23S rRNA. This is Large ribosomal subunit protein bL9 from Yersinia pseudotuberculosis serotype I (strain IP32953).